We begin with the raw amino-acid sequence, 312 residues long: tRNA dimethylallyltransferase (312 aa).

Position 15 to 22 (Gly-15 to Ser-22) interacts with ATP. Thr-17–Ser-22 contributes to the substrate binding site. The interval Asp-40–Gln-43 is interaction with substrate tRNA.

It belongs to the IPP transferase family. As to quaternary structure, monomer. It depends on Mg(2+) as a cofactor.

The catalysed reaction is adenosine(37) in tRNA + dimethylallyl diphosphate = N(6)-dimethylallyladenosine(37) in tRNA + diphosphate. Catalyzes the transfer of a dimethylallyl group onto the adenine at position 37 in tRNAs that read codons beginning with uridine, leading to the formation of N6-(dimethylallyl)adenosine (i(6)A). This is tRNA dimethylallyltransferase from Streptomyces coelicolor (strain ATCC BAA-471 / A3(2) / M145).